A 355-amino-acid chain; its full sequence is Guanine nucleotide-binding protein G(i) subunit alpha-2 (355 aa).

A lipid anchor (N-myristoyl glycine) is attached at G2. The S-palmitoyl cysteine moiety is linked to residue C3. The G-alpha domain maps to 32 to 355 (REVKLLLLGA…KNNLKDCGLF (324 aa)). The interval 35–48 (KLLLLGAGESGKST) is G1 motif. Residues 40-47 (GAGESGKS), 176-182 (LRTRVKT), 201-205 (DVGGQ), 270-273 (NKKD), and A327 contribute to the GTP site. 2 residues coordinate Mg(2+): S47 and T182. The interval 174–182 (DVLRTRVKT) is G2 motif. The segment at 197–206 (FKMFDVGGQR) is G3 motif. The interval 266-273 (ILFLNKKD) is G4 motif. Positions 325 to 330 (TCATDT) are G5 motif.

It belongs to the G-alpha family. G(i/o/t/z) subfamily. As to quaternary structure, g proteins are composed of 3 units; alpha, beta and gamma. The alpha chain contains the guanine nucleotide binding site. In this context, interacts with GNB2. Interacts with UNC5B. Interacts with GPSM1. Interacts with RGS12 and RGS14. Interacts (inactive GDP-bound form) with NUCB1 (via GBA motif); the interaction leads to activation of GNAI3. Interacts (inactive GDP-bound form) with CCDC88C/DAPLE (via GBA motif). Interacts (inactive GDP-bound form) with CCDC8A/GIV (via GBA motif).

Its subcellular location is the cytoplasm. It is found in the cell membrane. It localises to the cytoskeleton. The protein localises to the microtubule organizing center. The protein resides in the centrosome. Its subcellular location is the membrane. Functionally, guanine nucleotide-binding proteins (G proteins) are involved as modulators or transducers in various transmembrane signaling systems. The G(i) proteins are involved in hormonal regulation of adenylate cyclase: they inhibit the cyclase in response to beta-adrenergic stimuli. May play a role in cell division. The sequence is that of Guanine nucleotide-binding protein G(i) subunit alpha-2 (Gnai2) from Rattus norvegicus (Rat).